The following is a 56-amino-acid chain: MAVQQNKKSRSKRGMRRSHDSLGTAQLSVDATSGELHRRHNVTADGFYRGQKVINK.

Positions Met1–His40 are disordered. Residues Lys7–Arg16 are compositionally biased toward basic residues. Positions Ser21–Ala31 are enriched in polar residues.

The protein belongs to the bacterial ribosomal protein bL32 family.

This is Large ribosomal subunit protein bL32 from Shewanella halifaxensis (strain HAW-EB4).